A 488-amino-acid polypeptide reads, in one-letter code: Glutamyl-tRNA(Gln) amidotransferase subunit A (488 aa).

Catalysis depends on charge relay system residues Lys-77 and Ser-152. The active-site Acyl-ester intermediate is Ser-176.

It belongs to the amidase family. GatA subfamily. In terms of assembly, heterotrimer of A, B and C subunits.

It catalyses the reaction L-glutamyl-tRNA(Gln) + L-glutamine + ATP + H2O = L-glutaminyl-tRNA(Gln) + L-glutamate + ADP + phosphate + H(+). Allows the formation of correctly charged Gln-tRNA(Gln) through the transamidation of misacylated Glu-tRNA(Gln) in organisms which lack glutaminyl-tRNA synthetase. The reaction takes place in the presence of glutamine and ATP through an activated gamma-phospho-Glu-tRNA(Gln). The sequence is that of Glutamyl-tRNA(Gln) amidotransferase subunit A from Streptococcus thermophilus (strain CNRZ 1066).